The chain runs to 186 residues: Translation initiation factor IF-3 (186 aa).

It belongs to the IF-3 family. As to quaternary structure, monomer.

It is found in the cytoplasm. IF-3 binds to the 30S ribosomal subunit and shifts the equilibrium between 70S ribosomes and their 50S and 30S subunits in favor of the free subunits, thus enhancing the availability of 30S subunits on which protein synthesis initiation begins. The protein is Translation initiation factor IF-3 of Borreliella burgdorferi (strain ATCC 35210 / DSM 4680 / CIP 102532 / B31) (Borrelia burgdorferi).